The primary structure comprises 857 residues: Phosphoenolpyruvate carboxylase (857 aa).

Residues histidine 144 and lysine 530 contribute to the active site.

This sequence belongs to the PEPCase type 1 family. Homotetramer. It depends on Mg(2+) as a cofactor. Post-translationally, the N-terminus is blocked.

The catalysed reaction is oxaloacetate + phosphate = phosphoenolpyruvate + hydrogencarbonate. Forms oxaloacetate, a four-carbon dicarboxylic acid source for the tricarboxylic acid cycle. The chain is Phosphoenolpyruvate carboxylase (ppc) from Thermus sp. (strain 71).